Consider the following 372-residue polypeptide: Alpha-parvin (372 aa).

Over residues 1–11 the composition is skewed to low complexity; the sequence is MATSPQKSPSV. Residues 1 to 45 are disordered; it reads MATSPQKSPSVPKSPTPKSPPSRKKDDSFLGKLGGTLARRKKAKE. Ala2 is modified (N-acetylalanine). Phosphoserine occurs at positions 8, 14, and 19. Positions 21–25 are interaction with ARHGAP31; that stretch reads PSRKK. Phosphoserine is present on residues Ser28 and Ser62. Calponin-homology (CH) domains follow at residues 95 to 202 and 262 to 369; these read QELM…QYFR and NVVK…TKYR. The required for interaction with TESK1 and ILK stretch occupies residues 223–372; that stretch reads GILQSRQIQE…NLFTKYRNVE (150 aa).

It belongs to the parvin family. As to quaternary structure, component of the heterotrimeric IPP (ILK-PINCH-PARVIN) complex composed of ILK, LIMS1/PINCH and PARVA; the complex binds to F-actin via the C-terminal tail of LIMS1 and the N-terminal region of PARVA, promoting F-actin filament bundling. Formation of the IPP complex is dependent on protein kinase C and precedes integrin-mediated cell adhesion and spreading. Interacts with TGFB1I1. Interacts with ARHGAP31. Interacts with the actin cytoskeleton. Interacts (via C-terminus) with TESK1 (via C-terminus); the interaction inhibits TESK1 kinase activity. Interacts with PXN/PAXILLIN (via LD motif 4). In terms of tissue distribution, widely expressed, with highest levels in heart, skeletal muscle, kidney and liver.

It localises to the cell junction. The protein localises to the focal adhesion. Its subcellular location is the cell membrane. It is found in the cytoplasm. The protein resides in the cytoskeleton. It localises to the myofibril. The protein localises to the sarcomere. Its subcellular location is the z line. Plays a role in sarcomere organization and in smooth muscle cell contraction. Required for normal development of the embryonic cardiovascular system, and for normal septation of the heart outflow tract. Plays a role in sprouting angiogenesis and is required for normal adhesion of vascular smooth muscle cells to endothelial cells during blood vessel development. Plays a role in the reorganization of the actin cytoskeleton, formation of lamellipodia and ciliogenesis. Plays a role in the establishment of cell polarity, cell adhesion, cell spreading, and directed cell migration. Within the IPP (ILK-PINCH-PARVIN) complex, binds to F-actin, promoting F-actin bundling, a process required to generate force for actin cytoskeleton reorganization and subsequent dynamic cell adhesion events such as cell spreading and migration. This chain is Alpha-parvin (PARVA), found in Homo sapiens (Human).